Here is a 54-residue protein sequence, read N- to C-terminus: ATP synthase protein 8 (54 aa).

Residues 8–28 form a helical membrane-spanning segment; it reads WWLLNFFLGWTSLLVIFIILL.

Belongs to the ATPase protein 8 family. As to quaternary structure, F-type ATPases have 2 components, CF(1) - the catalytic core - and CF(0) - the membrane proton channel.

The protein localises to the mitochondrion membrane. In terms of biological role, mitochondrial membrane ATP synthase (F(1)F(0) ATP synthase or Complex V) produces ATP from ADP in the presence of a proton gradient across the membrane which is generated by electron transport complexes of the respiratory chain. F-type ATPases consist of two structural domains, F(1) - containing the extramembraneous catalytic core and F(0) - containing the membrane proton channel, linked together by a central stalk and a peripheral stalk. During catalysis, ATP synthesis in the catalytic domain of F(1) is coupled via a rotary mechanism of the central stalk subunits to proton translocation. Part of the complex F(0) domain. Minor subunit located with subunit a in the membrane. The sequence is that of ATP synthase protein 8 (MT-ATP8) from Patiria pectinifera (Starfish).